A 201-amino-acid polypeptide reads, in one-letter code: Probable GTP-binding protein EngB (201 aa).

The 176-residue stretch at T22 to E197 folds into the EngB-type G domain. GTP is bound by residues G30 to S37, G57 to L61, D75 to G78, T142 to D145, and I175 to S178. Mg(2+) contacts are provided by S37 and T59.

The protein belongs to the TRAFAC class TrmE-Era-EngA-EngB-Septin-like GTPase superfamily. EngB GTPase family. Mg(2+) is required as a cofactor.

Necessary for normal cell division and for the maintenance of normal septation. The sequence is that of Probable GTP-binding protein EngB from Bacteroides fragilis (strain YCH46).